The chain runs to 310 residues: tRNA uridine(34) hydroxylase (310 aa).

One can recognise a Rhodanese domain in the interval 124–218 (SDPEVLLIDT…YFEEVPQEES (95 aa)). Catalysis depends on cysteine 178, which acts as the Cysteine persulfide intermediate.

This sequence belongs to the TrhO family.

It carries out the reaction uridine(34) in tRNA + AH2 + O2 = 5-hydroxyuridine(34) in tRNA + A + H2O. Functionally, catalyzes oxygen-dependent 5-hydroxyuridine (ho5U) modification at position 34 in tRNAs. This chain is tRNA uridine(34) hydroxylase, found in Pseudomonas putida (strain GB-1).